Consider the following 377-residue polypeptide: Nitric oxide reductase FlRd-NAD(+) reductase (377 aa).

It belongs to the FAD-dependent oxidoreductase family. The cofactor is FAD.

It is found in the cytoplasm. The enzyme catalyses 2 reduced [nitric oxide reductase rubredoxin domain] + NAD(+) + H(+) = 2 oxidized [nitric oxide reductase rubredoxin domain] + NADH. Its pathway is nitrogen metabolism; nitric oxide reduction. One of at least two accessory proteins for anaerobic nitric oxide (NO) reductase. Reduces the rubredoxin moiety of NO reductase. This chain is Nitric oxide reductase FlRd-NAD(+) reductase, found in Shigella boydii serotype 18 (strain CDC 3083-94 / BS512).